Here is a 101-residue protein sequence, read N- to C-terminus: 2-amino-4-ketopentanoate thiolase alpha subunit (101 aa).

Belongs to the OrtA family. As to quaternary structure, heterodimer with OrtB.

It catalyses the reaction D-alanine + acetyl-CoA = (2R)-2-amino-4-oxopentanoate + CoA. Its activity is regulated as follows. Completely inhibited by p-chloromercuribenzoate (p-ClHgBzO) and acetyl-CoA, and partially inhibited by N-ethylmaleimide. Its function is as follows. Involved in the ornithine fermentation pathway. Catalyzes the thiolytic cleavage of 2-amino-4-ketopentanoate (AKP) with coenzyme A (CoA) to form acetyl-CoA and alanine. It is strictly specific for AKP. This Acetoanaerobium sticklandii (strain ATCC 12662 / DSM 519 / JCM 1433 / CCUG 9281 / NCIMB 10654 / HF) (Clostridium sticklandii) protein is 2-amino-4-ketopentanoate thiolase alpha subunit.